The primary structure comprises 759 residues: Protein AKNAD1 (759 aa).

The segment at 169 to 246 (TDQLNPKKDG…HTEKASSGNR (78 aa)) is disordered. Residues 181-192 (SNKPGSPTMTEE) show a composition bias toward polar residues. Positions 371-482 (QKISQGKQMC…EDVKDKVDES (112 aa)) form a coiled coil. Positions 484–496 (YTSAPSLPVSSPV) are enriched in polar residues. Disordered stretches follow at residues 484–543 (YTSA…QEAP), 634–654 (EKAP…FCSD), 678–723 (CRKE…PSLA), and 735–759 (PDTS…MKSQ). Residues 497 to 509 (TLDDLASTSSSLS) show a composition bias toward low complexity. The span at 639 to 654 (SDSTPNSDTGHSFCSD) shows a compositional bias: polar residues. Over residues 679–688 (RKEPPKEFHY) the composition is skewed to basic and acidic residues. The segment covering 735–744 (PDTSKSSPTP) has biased composition (polar residues).

Belongs to the AKNA family.

This Macaca fascicularis (Crab-eating macaque) protein is Protein AKNAD1 (AKNAD1).